A 555-amino-acid polypeptide reads, in one-letter code: L-ascorbate oxidase homolog (555 aa).

The N-terminal stretch at Met1–Ala23 is a signal peptide. Plastocyanin-like domains are found at residues Asp25–Asn145 and Glu158–Gly301. 3 N-linked (GlcNAc...) asparagine glycosylation sites follow: Asn33, Asn61, and Asn110. The cysteines at positions 103 and 539 are disulfide-linked. Residues Asn330, Asn350, and Asn422 are each glycosylated (N-linked (GlcNAc...) asparagine). Positions His345–Lys524 constitute a Plastocyanin-like 3 domain.

This sequence belongs to the multicopper oxidase family. Maximal expression in early binucleate microspores; declines considerably in mature trinucleate pollen.

It localises to the secreted. Probable oxidase that may be involved in pollen tube growth. This is L-ascorbate oxidase homolog (Bp10) from Brassica napus (Rape).